The primary structure comprises 759 residues: MAEGEDMQTFTSIMDALVRISTSMKNMEKELLCPVCQEMYKQPLVLPCTHNVCQACAREVLGQQGYIGHGGDPSSEPTSPASTPSTRSPRLSRRTLPKPDRLDRLLKSGFGTYPGRKRGALHPQTILFPCPACQGDVELGERGLSGLFRNLTLERVVERYRQSVSVGGAILCQLCKPPPLEATKGCSECRATFCNECFKLFHPWGTQKAQHEPTLPTLSFRPKGLMCPDHKEEVTHYCKTCQRLVCQLCRVRRTHSGHKITPVLSAYQALKDKLTKSLAYILGNQDTVQTQICELEETIRHTEVSGQQAKEEVSQLVRGLGAVLEEKRSSLLQAIEECQQERLSRLSAQIHEHQSLLDGSGLVGYAQEVLKETDQPCFVQAAKQLHNRIARATEALQTFRPAASSSFRHCQLDVGREMKLLTELNFLRVPEAPVIDTQRTFAYDQIFLCWRLPPHSPPAWHYTVEFRRTDVPAQPGPTRWQRREEVRGTSALLENPDTGSVYVLRVRGCNKAGYGEYSEDVHLHTPPAPVLHFFLDGRWGASRERLAISKDQRAVRSIPGLPLLLAAERLLTGCHLSVDVVLGDVAVTQGRSYWACAVDPASYLVKVGVGLESKLQESFQGAPDVISPRYDPDSGHDSGAEDAAVEALPPFAFLTIGMGKILLGSGASSNAGLTGRDGPAASCTVPLPPRLGICLDYERGRVSFLDAVSFRGLLECPLDCSGPVCPAFCFIGGGAVQLQEPVGTKPERKVTIGGFAKLD.

Positions M1–V166 are required for proximal axon localization, axon formation and migration. The RING-type 1; degenerate zinc finger occupies C33–E59. The segment at I67 to K98 is disordered. Residues P73–P89 are compositionally biased toward low complexity. Residues C172 to K231 form an RING-type 2; degenerate zinc finger. A B box-type zinc finger spans residues P222–V263. Residues C227, H230, C249, and H255 each coordinate Zn(2+). Residues E294–R400 adopt a coiled-coil conformation. A Phosphoserine modification is found at S330. In terms of domain architecture, COS spans L370–L427. Positions Q411–V429 are required for microtubule association, proximal axon localization and axon formation. Residues V429 to A528 form the Fibronectin type-III domain. The 235-residue stretch at G513–E747 folds into the B30.2/SPRY domain. The residue at position 627 (S627) is a Phosphoserine.

Belongs to the TRIM/RBCC family. In terms of assembly, interacts with TUBB3 and TUBA4A. As to expression, expressed in primary hippocampal and cortical neurons.

Its subcellular location is the cell projection. The protein localises to the axon. It localises to the cytoplasm. It is found in the cytoskeleton. Its function is as follows. Microtubule-associated protein that is involved in the formation of parallel microtubule bundles linked by cross-bridges in the proximal axon. Required for the uniform orientation and maintenance of the parallel microtubule fascicles, which are important for efficient cargo delivery and trafficking in axons. Thereby also required for proper axon specification, the establishment of neuronal polarity and proper neuronal migration. This Rattus norvegicus (Rat) protein is Tripartite motif-containing protein 46.